Reading from the N-terminus, the 195-residue chain is MMEKSKPNVVFVLGGPGSGKGTQCANIVRDFGWVHLSAGDLLRQEQQSGSKDGEMIATMIKNGEIVPSIVTVKLLKNAIDANQGKNFLVDGFPRNEENNNSWEENMKDFVDTKFVLFFDCPEEVMTQRLLKRGESSGRSDDNIESIKKRFNTFNVQTKLVIDHYNKFDKVKIIPANRDVNEVYNDVENLFKSMGF.

Glycine 17–threonine 22 provides a ligand contact to ATP. Residues serine 37–valine 66 are NMP. Residues arginine 43, glutamate 64–valine 66, and glycine 91–arginine 94 each bind a ribonucleoside 5'-phosphate. Asparagine 98 provides a ligand contact to CMP. Residues lysine 131–aspartate 141 form an LID region. Arginine 132 serves as a coordination point for ATP. Positions 138 and 149 each coordinate a ribonucleoside 5'-phosphate. Arginine 177 is a binding site for ATP.

The protein belongs to the adenylate kinase family. UMP-CMP kinase subfamily. In terms of assembly, monomer. It depends on Mg(2+) as a cofactor.

The protein resides in the cytoplasm. It is found in the nucleus. The enzyme catalyses CMP + ATP = CDP + ADP. It catalyses the reaction dCMP + ATP = dCDP + ADP. The catalysed reaction is UMP + ATP = UDP + ADP. In terms of biological role, catalyzes the phosphorylation of pyrimidine nucleoside monophosphates at the expense of ATP. Plays an important role in de novo pyrimidine nucleotide biosynthesis. Has preference for UMP and CMP as phosphate acceptors. This Dictyostelium discoideum (Social amoeba) protein is UMP-CMP kinase.